The following is an 808-amino-acid chain: Dynamin-related protein 3A (808 aa).

Residues Met1 to Ala31 form a disordered region. Residues Pro16–Thr28 show a composition bias toward low complexity. Positions Thr56–Pro330 constitute a Dynamin-type G domain. Residues Gly66 to Ser73 are G1 motif. Gly66–Ser73 is a binding site for GTP. The interval Cys92–Arg94 is G2 motif. The segment at Asp172–Gly175 is G3 motif. Residues Asp172–Ile176 and Thr241–Asp244 contribute to the GTP site. Positions Thr241–Asp244 are G4 motif. A G5 motif region spans residues Val271–Cys274. Positions Ile548–Gly578 are disordered. Residues Arg554 to Arg563 show a composition bias toward basic and acidic residues. A compositionally biased stretch (low complexity) spans Thr564–Ser575. One can recognise a GED domain in the interval Ile670–Asp761. The tract at residues Leu774–Phe808 is disordered. Positions Thr775 to Thr792 are enriched in low complexity.

Belongs to the TRAFAC class dynamin-like GTPase superfamily. Dynamin/Fzo/YdjA family. In terms of assembly, homooligomer. Interacts with ARC5 on peroxisomes and ELM1 on mitochondria. As to expression, ubiquitous. Preferentially expressed in flowers.

It localises to the mitochondrion. The protein resides in the peroxisome. Functionally, involved in the control of mitochondrial and peroxisomal division and morphology. In association with PEX11C, PEX11D, PEX11E and FIS1B, is involved in cell cycle-associated constitutive self-replication of preexisting peroxisomes. The chain is Dynamin-related protein 3A (DRP3A) from Arabidopsis thaliana (Mouse-ear cress).